A 422-amino-acid chain; its full sequence is 5'-deoxyadenosine deaminase (422 aa).

H57 and H59 together coordinate Zn(2+). The substrate site is built by E86 and H178. Residue H205 coordinates Zn(2+). Substrate contacts are provided by E208 and D294. A Zn(2+)-binding site is contributed by D294.

The protein belongs to the metallo-dependent hydrolases superfamily. MTA/SAH deaminase family. Homotetramer. It depends on Zn(2+) as a cofactor.

It carries out the reaction 5'-deoxyadenosine + H2O + H(+) = 5'-deoxyinosine + NH4(+). The catalysed reaction is S-adenosyl-L-homocysteine + H2O + H(+) = S-inosyl-L-homocysteine + NH4(+). It catalyses the reaction S-methyl-5'-thioadenosine + H2O + H(+) = S-methyl-5'-thioinosine + NH4(+). The enzyme catalyses adenosine + H2O + H(+) = inosine + NH4(+). Its pathway is amino-acid biosynthesis; S-adenosyl-L-methionine biosynthesis. Its function is as follows. Catalyzes the deamination of three SAM-derived enzymatic products, namely 5'-deoxyadenosine, S-adenosyl-L-homocysteine, and 5'-methylthioadenosine, to produce the inosine analogs. Can also deaminate adenosine. The preferred substrate for this enzyme is 5'-deoxyadenosine, but all these substrates are efficiently deaminated. Likely functions in a S-adenosyl-L-methionine (SAM) recycling pathway from S-adenosyl-L-homocysteine (SAH) produced from SAM-dependent methylation reactions. May also be involved in the recycling of 5'-deoxyadenosine, whereupon the 5'-deoxyribose moiety of 5'-deoxyinosine is further metabolized to deoxyhexoses used for the biosynthesis of aromatic amino acids in methanogens. This chain is 5'-deoxyadenosine deaminase, found in Methanococcus vannielii (strain ATCC 35089 / DSM 1224 / JCM 13029 / OCM 148 / SB).